Consider the following 223-residue polypeptide: MSSQPSFVTIRGKAISLETQTESLLSKYSTFAQTTSSEQTGQEKKIDKQLEGILGQRQDVIDSLTQICDSNPAISASKLSQLHRHKEILQDHWKSFRNIRSSIQQERNRLNLLFSVKNDIANSTTDAPAPIGDADEYIQNETRRIDQSNNVVDRLISQAWETRSQFHSQSNVLNTANNKVLQTLQRIPGVNQLIMKINTRRKKNAFVLATITTLCILFLFFTW.

Serine 2 is modified (N-acetylserine). At 2-204 (SSQPSFVTIR…MKINTRRKKN (203 aa)) the chain is on the cytoplasmic side. Phosphoserine is present on serine 164. The helical; Anchor for type IV membrane protein transmembrane segment at 205–222 (AFVLATITTLCILFLFFT) threads the bilayer. Position 223 (tryptophan 223) is a topological domain, vesicular.

Belongs to the GOSR1 family. Component of several multiprotein Golgi SNARE complexes. Identified in a Golgi SNARE complex consisting of t-SNARES SED5, YKT6, and the v-SNARE SFT1. Interacts with BET1. Interacts with BOS1. Interacts with SEC22. Interacts with PEP12. Interacts with self.

The protein resides in the golgi apparatus membrane. In terms of biological role, involved in transport from the ER to the Golgi apparatus as well as in intra-Golgi transport. It belongs to a super-family of proteins called t-SNAREs or soluble NSF (N-ethylmaleimide-sensitive factor) attachment protein receptor. Rescues alpha-factor maturation defects. The polypeptide is Golgi SNAP receptor complex member 1 (GOS1) (Saccharomyces cerevisiae (strain ATCC 204508 / S288c) (Baker's yeast)).